The following is a 412-amino-acid chain: tRNA (guanine-N(7)-)-methyltransferase non-catalytic subunit WDR4 (412 aa).

Ala2 carries the post-translational modification N-acetylalanine. 7 WD repeats span residues 3-40, 50-90, 94-131, 137-174, 180-218, 230-273, and 319-373; these read GSVG…IYDC, NKGE…LFRT, QCLS…SFSV, CGRL…VSWA, IESF…LWEY, ASLQ…IFQL, and PVGD…SYLK. The disordered stretch occupies residues 377–412; that stretch reads ERLQQQLEKKQRRRSPPPGPDGHAKKMRPGEATLSC. 2 positions are modified to phosphoserine: Ser391 and Ser411.

The protein belongs to the WD repeat TRM82 family. In terms of assembly, non-catalytic component of the METTL1-WDR4 complex, composed of METTL1 and WDR4. Interacts with FEN1; the interaction is direct.

Its subcellular location is the nucleus. It is found in the chromosome. It participates in tRNA modification; N(7)-methylguanine-tRNA biosynthesis. Its function is as follows. Non-catalytic component of the METTL1-WDR4 methyltransferase complex required for the formation of N(7)-methylguanine in a subset of RNA species, such as tRNAs, mRNAs and microRNAs (miRNAs). In the METTL1-WDR4 methyltransferase complex, WDR4 acts as a scaffold for tRNA-binding. Required for the formation of N(7)-methylguanine at position 46 (m7G46) in a large subset of tRNAs that contain the 5'-RAGGU-3' motif within the variable loop. M7G46 interacts with C13-G22 in the D-loop to stabilize tRNA tertiary structure and protect tRNAs from decay. Also required for the formation of N(7)-methylguanine at internal sites in a subset of mRNAs. Also required for methylation of a specific subset of miRNAs, such as let-7. Independently of METTL1, also plays a role in genome stability: localizes at the DNA replication site and regulates endonucleolytic activities of FEN1. This Homo sapiens (Human) protein is tRNA (guanine-N(7)-)-methyltransferase non-catalytic subunit WDR4.